The chain runs to 104 residues: N(4)-acetylcytidine amidohydrolase (104 aa).

The 96-residue stretch at 6–101 (TFFERFEHDI…EQLYMIRFKV (96 aa)) folds into the ASCH domain. Catalysis depends on Lys-20, which acts as the Proton acceptor. The active-site Nucleophile is Thr-23. Glu-73 (proton donor) is an active-site residue.

Belongs to the N(4)-acetylcytidine amidohydrolase family.

It carries out the reaction N(4)-acetylcytidine + H2O = cytidine + acetate + H(+). It catalyses the reaction N(4)-acetyl-2'-deoxycytidine + H2O = 2'-deoxycytidine + acetate + H(+). The catalysed reaction is N(4)-acetylcytosine + H2O = cytosine + acetate + H(+). Functionally, catalyzes the hydrolysis of N(4)-acetylcytidine (ac4C). In Shewanella oneidensis (strain ATCC 700550 / JCM 31522 / CIP 106686 / LMG 19005 / NCIMB 14063 / MR-1), this protein is N(4)-acetylcytidine amidohydrolase.